Reading from the N-terminus, the 117-residue chain is Large ribosomal subunit protein bL19 (117 aa).

It belongs to the bacterial ribosomal protein bL19 family.

Its function is as follows. This protein is located at the 30S-50S ribosomal subunit interface and may play a role in the structure and function of the aminoacyl-tRNA binding site. In Micrococcus luteus (strain ATCC 4698 / DSM 20030 / JCM 1464 / CCM 169 / CCUG 5858 / IAM 1056 / NBRC 3333 / NCIMB 9278 / NCTC 2665 / VKM Ac-2230) (Micrococcus lysodeikticus), this protein is Large ribosomal subunit protein bL19.